Consider the following 242-residue polypeptide: Proteasome subunit beta type-4 (242 aa).

Positions 1–23 (ESVARGTAPGELHCFPGAGPVRH) are excised as a propeptide. Thr-24 acts as the Nucleophile in catalysis.

The protein belongs to the peptidase T1B family. As to quaternary structure, the 26S proteasome consists of a 20S proteasome core and two 19S regulatory subunits. The 20S proteasome core is composed of 28 subunits that are arranged in four stacked rings, resulting in a barrel-shaped structure. The two end rings are each formed by seven alpha subunits, and the two central rings are each formed by seven beta subunits. The catalytic chamber with the active sites is on the inside of the barrel.

The protein resides in the cytoplasm. Its subcellular location is the nucleus. Functionally, non-catalytic component of the proteasome, a multicatalytic proteinase complex which is characterized by its ability to cleave peptides with Arg, Phe, Tyr, Leu, and Glu adjacent to the leaving group at neutral or slightly basic pH. The proteasome has an ATP-dependent proteolytic activity. The sequence is that of Proteasome subunit beta type-4 (psmb4) from Xenopus laevis (African clawed frog).